The sequence spans 75 residues: Tautomerase PptA (75 aa).

Catalysis depends on proline 2, which acts as the Proton acceptor; via imino nitrogen.

It belongs to the 4-oxalocrotonate tautomerase family. PptA subfamily. Homodimer.

The protein resides in the cytoplasm. This is Tautomerase PptA from Klebsiella pneumoniae subsp. pneumoniae (strain ATCC 700721 / MGH 78578).